We begin with the raw amino-acid sequence, 148 residues long: Putative ankyrin repeat protein RF_1158 (148 aa).

The ANK repeat unit spans residues 82–115 (RPTTALGIAIAQGNSEEVIKYLLANGADPKLAFD).

The sequence is that of Putative ankyrin repeat protein RF_1158 from Rickettsia felis (strain ATCC VR-1525 / URRWXCal2) (Rickettsia azadi).